The chain runs to 153 residues: Regulatory protein RecX (153 aa).

Belongs to the RecX family.

It is found in the cytoplasm. Its function is as follows. Modulates RecA activity. The sequence is that of Regulatory protein RecX from Pseudomonas aeruginosa (strain UCBPP-PA14).